Consider the following 196-residue polypeptide: Putative manganese efflux pump MntP (196 aa).

6 helical membrane passes run 3–23 (PASL…ASIG), 39–59 (IGAV…ALGH), 67–87 (GVDH…MIWA), 109–129 (IWLI…VGIT), 137–157 (IIAA…LGTL), and 172–192 (ILGG…HLAG).

It belongs to the MntP (TC 9.B.29) family.

The protein localises to the cell inner membrane. Its function is as follows. Probably functions as a manganese efflux pump. This Chromohalobacter salexigens (strain ATCC BAA-138 / DSM 3043 / CIP 106854 / NCIMB 13768 / 1H11) protein is Putative manganese efflux pump MntP.